Reading from the N-terminus, the 397-residue chain is Kappa-carrageenase (397 aa).

Positions 1–25 (MKPISIVAFPIPAISMLLLSAVSQA) are cleaved as a signal peptide. The 274-residue stretch at 26 to 299 (ASMQPPIAKP…YVRTWVKVGN (274 aa)) folds into the GH16 domain. Residues Cys98 and Cys268 are joined by a disulfide bond. The active-site Nucleophile is the Glu163. The active site involves Asp165. The active-site Proton donor is Glu168. A BIG2 domain is found at 316 to 387 (AVNSVQLSAA…TITVKTKNKG (72 aa)).

It belongs to the glycosyl hydrolase 16 family.

Its subcellular location is the periplasm. The enzyme catalyses Endohydrolysis of (1-&gt;4)-beta-D-linkages between D-galactose 4-sulfate and 3,6-anhydro-D-galactose in kappa-carrageenans.. The chain is Kappa-carrageenase (cgkA) from Pseudoalteromonas carrageenovora (Alteromonas carrageenovora).